The following is a 271-amino-acid chain: Zinc finger CCHC domain-containing protein 9 (271 aa).

The tract at residues 1–67 (MTRWARVTTS…RKKNKKKKEY (67 aa)) is disordered. The span at 7–20 (VTTSNSKRPLSATS) shows a compositional bias: polar residues. Basic and acidic residues predominate over residues 22–33 (EDMKKGSVERAD). Polar residues predominate over residues 35-46 (SLPNRKQCQSSR). The span at 56–65 (AKRKKNKKKK) shows a compositional bias: basic residues. 4 consecutive CCHC-type zinc fingers follow at residues 128 to 145 (MVCF…DCPA), 155 to 172 (GICY…KCRA), 184 to 201 (AKCF…SCPD), and 211 to 228 (GSCK…DCRE).

As to expression, detected in brain cortex and in testis.

It is found in the nucleus. Its subcellular location is the nucleolus. May down-regulate transcription mediated by NF-kappa-B and the serum response element. The sequence is that of Zinc finger CCHC domain-containing protein 9 (Zcchc9) from Mus musculus (Mouse).